A 75-amino-acid chain; its full sequence is uncharacterized protein (75 aa).

An N-terminal signal peptide occupies residues 1-26 (MQFLERHFSVLFPVLFFFSFYPISFA).

The protein localises to the secreted. This is an uncharacterized protein from Schizosaccharomyces pombe (strain 972 / ATCC 24843) (Fission yeast).